A 457-amino-acid polypeptide reads, in one-letter code: Adenylosuccinate synthetase isozyme 1 (457 aa).

The segment at 1-25 is disordered; that stretch reads MSGTRASNDRPPSAGGVKRGRLQHE. GTP is bound by residues 42 to 48 and 70 to 72; these read GDEGKGK and GHT. Asp-43 serves as the catalytic Proton acceptor. Positions 43 and 70 each coordinate Mg(2+). A substrate-binding site is contributed by Asp-43. Residues 43–46, 68–71, Thr-163, Arg-177, Asn-256, Thr-271, and Arg-335 contribute to the IMP site; these read DEGK and NAGH. The Proton donor role is filled by His-71. Residue 331–337 coordinates substrate; the sequence is VTTGRKR. Residues Arg-337, 363 to 365, and 445 to 448 each bind GTP; these read KLD and GVGK.

The protein belongs to the adenylosuccinate synthetase family. In terms of assembly, homodimer. The cofactor is Mg(2+). As to expression, predominantly expressed in the striated muscle tissues.

It is found in the cytoplasm. It carries out the reaction IMP + L-aspartate + GTP = N(6)-(1,2-dicarboxyethyl)-AMP + GDP + phosphate + 2 H(+). The protein operates within purine metabolism; AMP biosynthesis via de novo pathway; AMP from IMP: step 1/2. Its function is as follows. Component of the purine nucleotide cycle (PNC), which interconverts IMP and AMP to regulate the nucleotide levels in various tissues, and which contributes to glycolysis and ammoniagenesis. Catalyzes the first committed step in the biosynthesis of AMP from IMP. This Sus scrofa (Pig) protein is Adenylosuccinate synthetase isozyme 1.